Reading from the N-terminus, the 214-residue chain is Cytochrome b (214 aa).

Transmembrane regions (helical) follow at residues 31–51, 75–96, 111–131, and 176–196; these read FGSM…FLAI, WIMQ…YIHI, WLSG…GYVL, and FFAL…IHIL. Residues histidine 81 and histidine 95 each coordinate heme b. 2 residues coordinate heme b: histidine 180 and histidine 194. Histidine 199 serves as a coordination point for a ubiquinone.

The protein belongs to the cytochrome b family. The cytochrome bc1 complex contains 3 respiratory subunits (MT-CYB, CYC1 and UQCRFS1), 2 core proteins (UQCRC1 and UQCRC2) and probably 6 low-molecular weight proteins. It depends on heme b as a cofactor.

The protein resides in the mitochondrion inner membrane. Its function is as follows. Component of the ubiquinol-cytochrome c reductase complex (complex III or cytochrome b-c1 complex) that is part of the mitochondrial respiratory chain. The b-c1 complex mediates electron transfer from ubiquinol to cytochrome c. Contributes to the generation of a proton gradient across the mitochondrial membrane that is then used for ATP synthesis. This chain is Cytochrome b (MT-CYB), found in Bothrops atrox (Barba amarilla).